Here is a 609-residue protein sequence, read N- to C-terminus: Glutamine--fructose-6-phosphate aminotransferase [isomerizing] (609 aa).

Residue Cys2 is the Nucleophile; for GATase activity of the active site. The 217-residue stretch at 2-218 (CGIVGAVAQR…EGDVVEVTRR (217 aa)) folds into the Glutamine amidotransferase type-2 domain. SIS domains lie at 286 to 426 (ADAL…LKGA) and 458 to 599 (LAEG…VDQP). The active-site For Fru-6P isomerization activity is Lys604.

Homodimer.

The protein localises to the cytoplasm. It catalyses the reaction D-fructose 6-phosphate + L-glutamine = D-glucosamine 6-phosphate + L-glutamate. In terms of biological role, catalyzes the first step in hexosamine metabolism, converting fructose-6P into glucosamine-6P using glutamine as a nitrogen source. The sequence is that of Glutamine--fructose-6-phosphate aminotransferase [isomerizing] from Yersinia pestis.